The sequence spans 481 residues: Argininosuccinate lyase (481 aa).

It belongs to the lyase 1 family. Argininosuccinate lyase subfamily.

The protein resides in the cytoplasm. It catalyses the reaction 2-(N(omega)-L-arginino)succinate = fumarate + L-arginine. It participates in amino-acid biosynthesis; L-arginine biosynthesis; L-arginine from L-ornithine and carbamoyl phosphate: step 3/3. This is Argininosuccinate lyase from Methanococcus maripaludis (strain C5 / ATCC BAA-1333).